Here is an 85-residue protein sequence, read N- to C-terminus: Small ribosomal subunit protein uS17 (85 aa).

This sequence belongs to the universal ribosomal protein uS17 family. In terms of assembly, part of the 30S ribosomal subunit.

Its function is as follows. One of the primary rRNA binding proteins, it binds specifically to the 5'-end of 16S ribosomal RNA. The polypeptide is Small ribosomal subunit protein uS17 (Haemophilus influenzae (strain 86-028NP)).